The primary structure comprises 161 residues: Transcriptional repressor NrdR (161 aa).

Residues 1–23 are disordered; that stretch reads MRCPFCGHPDTQVKDSRPAEDGN. A zinc finger lies at 3-34; the sequence is CPFCGHPDTQVKDSRPAEDGNAIRRRRQCPSC. A compositionally biased stretch (basic and acidic residues) spans 11-23; that stretch reads TQVKDSRPAEDGN. Positions 49–139 constitute an ATP-cone domain; it reads LTVMKKSGRR…VYKDFHKVED (91 aa).

Belongs to the NrdR family. The cofactor is Zn(2+).

Functionally, negatively regulates transcription of bacterial ribonucleotide reductase nrd genes and operons by binding to NrdR-boxes. This is Transcriptional repressor NrdR from Maricaulis maris (strain MCS10) (Caulobacter maris).